The chain runs to 163 residues: uncharacterized protein (163 aa).

It belongs to the IMPDH/GMPR family.

This is an uncharacterized protein from Haemophilus influenzae (strain ATCC 51907 / DSM 11121 / KW20 / Rd).